The chain runs to 174 residues: Nascent polypeptide-associated complex subunit alpha (174 aa).

Position 2 is an N-acetylserine (S2). An NAC-A/B domain is found at 14-78; the sequence is NKNEKKAREL…AKVDNFTQKL (65 aa). The disordered stretch occupies residues 85–137; it reads AQASGIMPSNEDVATKSPEDIQADMQAAAEGSVNAAAEEDDEEGEVDAGDLNK. S93 bears the Phosphoserine mark. A compositionally biased stretch (low complexity) spans 111-120; it reads AAAEGSVNAA. A compositionally biased stretch (acidic residues) spans 121–132; the sequence is AEEDDEEGEVDA. The UBA domain maps to 135 to 174; the sequence is LNKDDIELVVQQTNVSKNQAIKALKAHNGDLVNAIMSLSK.

This sequence belongs to the NAC-alpha family. In terms of assembly, part of the nascent polypeptide-associated complex (NAC), consisting of EGD2 and either EGD1 or BTT1. NAC associates with ribosomes via EGD1 or BTT1, and with the CCR4-NOT complex.

The protein resides in the cytoplasm. Its subcellular location is the nucleus. In terms of biological role, component of the nascent polypeptide-associated complex (NAC), a dynamic component of the ribosomal exit tunnel, protecting the emerging polypeptides from interaction with other cytoplasmic proteins to ensure appropriate nascent protein targeting. The NAC complex also promotes mitochondrial protein import by enhancing productive ribosome interactions with the outer mitochondrial membrane and blocks the inappropriate interaction of ribosomes translating non-secretory nascent polypeptides with translocation sites in the membrane of the endoplasmic reticulum. EGD2 may also be involved in transcription regulation. This is Nascent polypeptide-associated complex subunit alpha (EGD2) from Saccharomyces cerevisiae (strain YJM789) (Baker's yeast).